Consider the following 177-residue polypeptide: MSRVAKAPVTIPAGVEVTLNGQELSIKGGKGSLVRSIHAGVEVTKEDNVLKFAPRDGIAGADAQAGTARALVNNMVIGVTQGFERKLQLVGVGYKASIKGNAVALALGFSHPVEHALPAGVTAECPTATEIVLRGVDKQLVGQVAADIRAYRAPEPYKGKGVRYANEQVRTKEAKKK.

The protein belongs to the universal ribosomal protein uL6 family. As to quaternary structure, part of the 50S ribosomal subunit.

Its function is as follows. This protein binds to the 23S rRNA, and is important in its secondary structure. It is located near the subunit interface in the base of the L7/L12 stalk, and near the tRNA binding site of the peptidyltransferase center. The polypeptide is Large ribosomal subunit protein uL6 (Aeromonas hydrophila subsp. hydrophila (strain ATCC 7966 / DSM 30187 / BCRC 13018 / CCUG 14551 / JCM 1027 / KCTC 2358 / NCIMB 9240 / NCTC 8049)).